Here is a 177-residue protein sequence, read N- to C-terminus: MERINTTFYKTKVIPQLQQKYSYSNVHQIPKLRSIHLNRCLGAVSQKIFQKSSEEIAMISGQRPKITYAKKAIAGFQIRKGMPIGMTVTLRRERMYDFLTKFIHLILPRLKDFRGLNPTSFDGNGNYHMGLPDQLAFPEIDYDQIDQYRGMDISIITTAKTDEEAKFLLEALGMRFQ.

This sequence belongs to the universal ribosomal protein uL5 family. In terms of assembly, part of the 50S ribosomal subunit; contacts the 5S rRNA.

The protein localises to the plastid. The protein resides in the chloroplast. In terms of biological role, binds 5S rRNA, forms part of the central protuberance of the 50S subunit. The polypeptide is Large ribosomal subunit protein uL5c (rpl5) (Cyanidioschyzon merolae (strain NIES-3377 / 10D) (Unicellular red alga)).